Consider the following 2014-residue polypeptide: AP-1 accessory protein LAA1 (2014 aa).

In terms of assembly, interacts with the clathrin-associated adapter complex AP-1. Interacts directly with LAA2.

The protein localises to the golgi apparatus. Its subcellular location is the cytoplasmic vesicle. It localises to the clathrin-coated vesicle. Involved in localization of clathrin adapter protein complex-1 (AP-1) and subsequent AP-1-mediated clathrin-coated vesicle cargo loading. In complex with LAA2, cooperates with the small GTPase ARF1 and the phosphatidyl-inositol-4-phosphate (PI4P) synthesis to confer temporal specificity to AP-1 recruitment. The sequence is that of AP-1 accessory protein LAA1 from Saccharomyces cerevisiae (strain ATCC 204508 / S288c) (Baker's yeast).